Reading from the N-terminus, the 88-residue chain is Translation initiation factor IF-1 2 (88 aa).

Residues 1–72 enclose the S1-like domain; it reads MAKEELIEMQ…TKGRITFRHL (72 aa).

Belongs to the IF-1 family. As to quaternary structure, component of the 30S ribosomal translation pre-initiation complex which assembles on the 30S ribosome in the order IF-2 and IF-3, IF-1 and N-formylmethionyl-tRNA(fMet); mRNA recruitment can occur at any time during PIC assembly.

The protein localises to the cytoplasm. Its function is as follows. One of the essential components for the initiation of protein synthesis. Stabilizes the binding of IF-2 and IF-3 on the 30S subunit to which N-formylmethionyl-tRNA(fMet) subsequently binds. Helps modulate mRNA selection, yielding the 30S pre-initiation complex (PIC). Upon addition of the 50S ribosomal subunit IF-1, IF-2 and IF-3 are released leaving the mature 70S translation initiation complex. The protein is Translation initiation factor IF-1 2 of Acidovorax sp. (strain JS42).